Consider the following 156-residue polypeptide: Small ribosomal subunit protein uS7 (156 aa).

It belongs to the universal ribosomal protein uS7 family. In terms of assembly, part of the 30S ribosomal subunit. Contacts proteins S9 and S11.

Functionally, one of the primary rRNA binding proteins, it binds directly to 16S rRNA where it nucleates assembly of the head domain of the 30S subunit. Is located at the subunit interface close to the decoding center, probably blocks exit of the E-site tRNA. The protein is Small ribosomal subunit protein uS7 of Dictyoglomus turgidum (strain DSM 6724 / Z-1310).